The chain runs to 360 residues: Histidinol-phosphate aminotransferase (360 aa).

K218 carries the post-translational modification N6-(pyridoxal phosphate)lysine.

The protein belongs to the class-II pyridoxal-phosphate-dependent aminotransferase family. Histidinol-phosphate aminotransferase subfamily. Homodimer. The cofactor is pyridoxal 5'-phosphate.

It catalyses the reaction L-histidinol phosphate + 2-oxoglutarate = 3-(imidazol-4-yl)-2-oxopropyl phosphate + L-glutamate. Its pathway is amino-acid biosynthesis; L-histidine biosynthesis; L-histidine from 5-phospho-alpha-D-ribose 1-diphosphate: step 7/9. This is Histidinol-phosphate aminotransferase from Pelagibacter ubique (strain HTCC1062).